The primary structure comprises 734 residues: Elongation factor G, mitochondrial (734 aa).

A mitochondrion-targeting transit peptide spans 1–32 (MTSFLTSRFGGLALRNVMNNKNGINSFGLRCF). One can recognise a tr-type G domain in the interval 38-318 (SGLRNIGISA…GVIKYLPSPN (281 aa)). Residues 47–54 (AHIDSGKT), 114–118 (DTPGH), and 168–171 (NKLD) each bind GTP.

This sequence belongs to the TRAFAC class translation factor GTPase superfamily. Classic translation factor GTPase family. EF-G/EF-2 subfamily.

It localises to the mitochondrion. It carries out the reaction GTP + H2O = GDP + phosphate + H(+). Its pathway is protein biosynthesis; polypeptide chain elongation. Mitochondrial GTPase that catalyzes the GTP-dependent ribosomal translocation step during translation elongation. During this step, the ribosome changes from the pre-translocational (PRE) to the post-translocational (POST) state as the newly formed A-site-bound peptidyl-tRNA and P-site-bound deacylated tRNA move to the P and E sites, respectively. Catalyzes the coordinated movement of the two tRNA molecules, the mRNA and conformational changes in the ribosome. The protein is Elongation factor G, mitochondrial (gfm1) of Dictyostelium discoideum (Social amoeba).